Reading from the N-terminus, the 347-residue chain is Trace amine-associated receptor 4 (347 aa).

Over Met1–Tyr37 the chain is Extracellular. N-linked (GlcNAc...) asparagine glycosylation is present at Asn20. 2 disulfides stabilise this stretch: Cys23–Cys187 and Cys106–Cys191. A helical membrane pass occupies residues Leu38 to Ile58. The Cytoplasmic segment spans residues Ala59–Asn69. A helical transmembrane segment spans residues Phe70–Ser90. Residues Met91–Ser110 lie on the Extracellular side of the membrane. The chain crosses the membrane as a helical span at residues Cys111–Val129. The Cytoplasmic portion of the chain corresponds to Asp130 to Val149. Residues Val150–Phe170 traverse the membrane as a helical segment. Residues Ser171–Lys197 lie on the Extracellular side of the membrane. The extracellular Loop 2 (ECL2) stretch occupies residues Leu175–Thr188. The helical transmembrane segment at Leu198–Ile218 threads the bilayer. Topologically, residues Tyr219–Lys260 are cytoplasmic. Residues Thr261 to Ile281 traverse the membrane as a helical segment. At Thr282–Asn296 the chain is on the extracellular side. A helical transmembrane segment spans residues Val297–Tyr317. The Cytoplasmic segment spans residues Pro318–Pro347.

The protein belongs to the G-protein coupled receptor 1 family. As to expression, specifically expressed in neurons of the olfactory epithelium, to discrete glomeruli predominantly localized to a confined bulb region. Present in the dorsal area of the main olfactory epithelium.

The protein localises to the cell membrane. Functionally, olfactory receptor specific for 2-phenylethylamine, a trace amine present at high concentration in the urine of carnivore species, playing a key role in fear and avoidance responses. 2-phenylethylamine acts as a kairomone in the chemical detection of carnivore odor and triggers fear in mice. This receptor is probably mediated by the G(s)-class of G-proteins which activate adenylate cyclase. The protein is Trace amine-associated receptor 4 of Mus musculus (Mouse).